Consider the following 136-residue polypeptide: Histone H2A (136 aa).

Over residues 1 to 11 (MSSGGKSGGKA) the composition is skewed to gly residues. Residues 1 to 24 (MSSGGKSGGKAGDASSKAQSRSAK) are disordered. 2 positions are modified to N6-acetyllysine: Lys6 and Lys10. Residues 12 to 24 (GDASSKAQSRSAK) are compositionally biased toward low complexity. At Gln108 the chain carries N5-methylglutamine. Ser133 is subject to Phosphoserine. Residues 133–134 (SQ) carry the [ST]-Q motif motif.

This sequence belongs to the histone H2A family. In terms of assembly, the nucleosome is a histone octamer containing two molecules each of H2A, H2B, H3 and H4 assembled in one H3-H4 heterotetramer and two H2A-H2B heterodimers. The octamer wraps approximately 147 bp of DNA. Phosphorylated to form H2AS128ph (gamma-H2A) in response to DNA double-strand breaks (DSBs) generated by exogenous genotoxic agents and by stalled replication forks. Phosphorylation is dependent on the DNA damage checkpoint kinases MEC1/ATR and TEL1/ATM, spreads on either side of a detected DSB site and may mark the surrounding chromatin for recruitment of proteins required for DNA damage signaling and repair. Gamma-H2A is removed from the DNA prior to the strand invasion-primer extension step of the repair process and subsequently dephosphorylated. Dephosphorylation is necessary for efficient recovery from the DNA damage checkpoint. In terms of processing, acetylated by ESA1 to form H2AK4ac and H2AK7ac.

Its subcellular location is the nucleus. It is found in the chromosome. Core component of nucleosome which plays a central role in DNA double strand break (DSB) repair. Nucleosomes wrap and compact DNA into chromatin, limiting DNA accessibility to the cellular machineries which require DNA as a template. Histones thereby play a central role in transcription regulation, DNA repair, DNA replication and chromosomal stability. DNA accessibility is regulated via a complex set of post-translational modifications of histones, also called histone code, and nucleosome remodeling. This chain is Histone H2A (HTA1), found in Mycosarcoma maydis (Corn smut fungus).